Consider the following 280-residue polypeptide: 1-cyclohexenylcarbonyl-CoA reductase (280 aa).

NADP(+)-binding positions include 22-25 (SRGI), 71-72 (DV), and N98. Residues Y158 and K165 each act as proton acceptor in the active site. NADP(+) is bound by residues K165 and 194 to 196 (IDS).

The protein belongs to the short-chain dehydrogenases/reductases (SDR) family. Homodimer.

It catalyses the reaction (4R,5R)-4,5-dihydroxycyclohex-2-ene-1-carbonyl-CoA + NADP(+) = (3R,4R)-3,4-dihydroxycyclohexa-1,5-diene-1-carbonyl-CoA + NADPH + H(+). The catalysed reaction is (3S)-3-hydroxycyclohexane-1-carbonyl-CoA + NADP(+) = (5S)-5-hydroxycyclohex-1-ene-1-carbonyl-CoA + NADPH + H(+). It carries out the reaction cyclohexane-1-carbonyl-CoA + NADP(+) = cyclohex-1-ene-1-carbonyl-CoA + NADPH + H(+). Its pathway is antibiotic biosynthesis. Its activity is regulated as follows. Inhibited by the thiol inhibitors p-chloromercuribenzoate, N-ethylmaleimide and iodoacetamide. Also inhibited by various divalent cations. Functionally, involved in the biosynthesis of the antifungal antibiotic ansatrienin A (mycotrienin I). Catalyzes three of the reductive steps involved in the formation of the cyclohexanecarboxylic acid (CHC) moiety of ansatrienin from shikimic acid. Can use 3,4-dihydroxycyclohexa-1,5-diene-1-carbonyl-CoA, 5-hydroxycyclohex-1-ene-1-carbonyl-CoA and cyclohex-1-ene-1-carbonyl-CoA as substrates. The polypeptide is 1-cyclohexenylcarbonyl-CoA reductase (Streptomyces collinus).